The primary structure comprises 166 residues: MARYLEVSDIVQQWRNERPDLDVEPMLVIGTLSRVSLLIDRALDKVFSKYKLSAREFDILATLRRRGAPYAISPSQIVNALMINNSTLTSRLDRLEQAGWLRRMPIEGDRRSVNIQLTDEGFALINRVVEEHVENERDILSPFSEEEKTHLRALLGRVEKHLVNNR.

Residues 25–160 (PMLVIGTLSR…LRALLGRVEK (136 aa)) enclose the HTH marR-type domain.

The protein resides in the cytoplasm. With respect to regulation, the presence of PecM is required to ensure the full regulation of the pecS-pecM intergenic region by PecS. In terms of biological role, negatively regulates the expression of genes encoding pectinase and cellulase, which play a major role in virulence, and the expression of the blue pigment indigoidine, which is implicated in pathogenicity and protection from oxidative stress. Represses the expression of genes involved in indigoidine biosynthesis by binding to indA and indC promoter regions. Also binds to promoter sites in the pecS-pecM intergenic region and negatively autoregulates its expression as well as that of pecM. In Dickeya dadantii (strain 3937) (Erwinia chrysanthemi (strain 3937)), this protein is HTH-type transcriptional regulator PecS.